Here is a 264-residue protein sequence, read N- to C-terminus: MNRSTISPVEARQQFRAGLIQPTSGWSAGFAQANLISMPQDLAYDFLLFAQRNPKPCPILEVLNAGETFGGIFGSNATEADIRTDAPQYRIYEHGELIDSPASAVDYWRDDLVSFIIGCSFTFEHPMVQAGVPVRHLEAGRNVPMYETSLACRPAGSLSGNLVVSLRMIPASQVADAVRITSRYPAVHGAPVHIGDPSLIGIDDINNPDFGDAPLSEPGDVPVFWACGVTPQAMVMSSKPPLAITHAPGHMLITDAPDLGFQVP.

The protein belongs to the D-glutamate cyclase family.

This is Putative hydro-lyase cgR_2449 from Corynebacterium glutamicum (strain R).